The primary structure comprises 179 residues: Ribulose bisphosphate carboxylase small subunit, chloroplastic 5 (179 aa).

A chloroplast-targeting transit peptide spans 1–58 (MASSATMLSSVATAACAAPAQASMVAPFVGLKSASAFPVTQKTATGLSTLPSNGGRVQ).

The protein belongs to the RuBisCO small chain family. Heterohexadecamer of 8 large and 8 small subunits.

It localises to the plastid. It is found in the chloroplast. Its function is as follows. RuBisCO catalyzes two reactions: the carboxylation of D-ribulose 1,5-bisphosphate, the primary event in carbon dioxide fixation, as well as the oxidative fragmentation of the pentose substrate. Both reactions occur simultaneously and in competition at the same active site. Although the small subunit is not catalytic it is essential for maximal activity. This chain is Ribulose bisphosphate carboxylase small subunit, chloroplastic 5, found in Fritillaria agrestis (Stinkbells).